A 385-amino-acid chain; its full sequence is MKDSFLFTSESVTEGHPDKMADQISDAVLDYIIERDKKAKVACETLVSNGFCMITGELKTSVYAPMQEIAREVVKKIGYTDALYGFDYRSAAVLNGIGEQSPDINQGVDREDGEIGAGDQGLMFGYACKETETLMPLPIHLAHQLAFALAQKRKDNTLPFLRPDGKSQVSVRYENNKPVSVDTIVISTQHSPEVSQKHLKEAVIEEIVYKVLPKEYLHDNIKFFINPTGKFVIGGPQGDAGLTGRKIIVDTYGGFCPHGGGAFSGKDPSKVDRSAAYAARYVAKNLVASGVCDKATVQLAYAIGVIEPVSIYVNTHNTSKHSSAELEKCVKSVFKLTPKGIIESLDLLRPIYSLTSAYGHFGRELEEFTWEKTNKVEEIKAFFKR.

Histidine 16 is a binding site for ATP. Aspartate 18 is a Mg(2+) binding site. Glutamate 44 provides a ligand contact to K(+). L-methionine is bound by residues glutamate 57 and glutamine 100. The flexible loop stretch occupies residues 100–110 (QSPDINQGVDR). ATP is bound by residues 164–166 (DGK), 230–231 (KF), aspartate 239, 245–246 (RK), alanine 262, and lysine 266. Residue aspartate 239 participates in L-methionine binding. L-methionine is bound at residue lysine 270.

Belongs to the AdoMet synthase family. In terms of assembly, homotetramer; dimer of dimers. The cofactor is Mg(2+). It depends on K(+) as a cofactor.

The protein localises to the cytoplasm. It carries out the reaction L-methionine + ATP + H2O = S-adenosyl-L-methionine + phosphate + diphosphate. It functions in the pathway amino-acid biosynthesis; S-adenosyl-L-methionine biosynthesis; S-adenosyl-L-methionine from L-methionine: step 1/1. Its function is as follows. Catalyzes the formation of S-adenosylmethionine (AdoMet) from methionine and ATP. The overall synthetic reaction is composed of two sequential steps, AdoMet formation and the subsequent tripolyphosphate hydrolysis which occurs prior to release of AdoMet from the enzyme. The sequence is that of S-adenosylmethionine synthase from Helicobacter pylori (strain J99 / ATCC 700824) (Campylobacter pylori J99).